The chain runs to 286 residues: Nucleotide-binding protein Sfum_2066 (286 aa).

Gly-8–Ser-15 contributes to the ATP binding site. Asp-59–Glu-62 is a GTP binding site.

It belongs to the RapZ-like family.

Functionally, displays ATPase and GTPase activities. In Syntrophobacter fumaroxidans (strain DSM 10017 / MPOB), this protein is Nucleotide-binding protein Sfum_2066.